Consider the following 297-residue polypeptide: tRNA dimethylallyltransferase (297 aa).

15–22 serves as a coordination point for ATP; the sequence is GPTASGKS. Residue 17 to 22 coordinates substrate; it reads TASGKS. 2 interaction with substrate tRNA regions span residues 40–43 and 164–168; these read DSMQ and QRIVR.

This sequence belongs to the IPP transferase family. Monomer. It depends on Mg(2+) as a cofactor.

It catalyses the reaction adenosine(37) in tRNA + dimethylallyl diphosphate = N(6)-dimethylallyladenosine(37) in tRNA + diphosphate. In terms of biological role, catalyzes the transfer of a dimethylallyl group onto the adenine at position 37 in tRNAs that read codons beginning with uridine, leading to the formation of N6-(dimethylallyl)adenosine (i(6)A). The protein is tRNA dimethylallyltransferase of Rhizobium etli (strain CIAT 652).